Reading from the N-terminus, the 561-residue chain is Arginine--tRNA ligase (561 aa).

A 'HIGH' region motif is present at residues 129 to 139 (ANPTGPLHVGH).

It belongs to the class-I aminoacyl-tRNA synthetase family. As to quaternary structure, monomer.

It localises to the cytoplasm. It catalyses the reaction tRNA(Arg) + L-arginine + ATP = L-arginyl-tRNA(Arg) + AMP + diphosphate. The polypeptide is Arginine--tRNA ligase (Bordetella avium (strain 197N)).